The chain runs to 794 residues: MSSSSNVTSLPRLTTAGGVFPREMVRVHSSCNILRSKAKVGGINYFNPGNIKCVEVHKSRQVAVAAVKSLEYETEKPTNQDVVSEKMRVLSERIGTMLQNMNEGEISISPYDTAWVALVEDTDGRPQFPTSLEWISNNQLADGSWGDRKFVIYDRILNTLACVVALTTWNMHPHKCNRGLRFIRDNIEKLENENEELMPIGFEVVFPSLIEAAQKLGIEIPHIDSPCIKKIQAMRDFKLKRIPMELLHKKPTSLLHSLEGMQGLVWEKLLDFRSDGSFLCSPSSTAYALQHTKDELCLQYLLKAVKKFNGGVPNVYPVDMFEHLWCVDRLQRLGICRYFRAQIKEMLDYVYKYWTDKGICWARNTNVQDVDDTAMGFRLLRMHGYDVSTDVFKQFEKAGEFCCFPGQSTHAITGMYNVYRTSQIMFDGEDILADAKNYSATFLHQKRLASELVDKWIITKDLPGEVGYALDVPFFASLPRLEARFFLEQYGGDDDVWIGKTLYRMPYVNSDTYLELAKLDYKKCQAVHQLEWKSIQKWYRDCKLGEFGLGEKRLLLAYFLAASTAFEPEKKGERLAWAKTAFLVETIASQQLSHEQKREFPNEFEHGSSLNMENGGRYKTRTRLVEILSNTVSQLSFETLVAEGRDIKQQLSNTWQKWLKTWEEGGNLGEAEAQLLLQTLHLSSGLDESSFSHPKYHQLLEATCKVCNQLRLFQNRKAHDAQGGISDLVIGTTFQIEASMQELVKLVFTKSSEDLDSITKQSFFAIARSFYYTAYCDAGAINSHIYKVLFENID.

The N-terminal 35 residues, 1–35 (MSSSSNVTSLPRLTTAGGVFPREMVRVHSSCNILR), are a transit peptide targeting the chloroplast. Lys238 is a substrate binding site. Mg(2+) is bound by residues Asp369 and Asp371. Residues 369-372 (DVDD) carry the DXDD motif motif. Lys455 lines the substrate pocket.

The protein belongs to the terpene synthase family. Tpsc subfamily. Mg(2+) is required as a cofactor. As to expression, expressed in leaves.

It is found in the plastid. The protein localises to the chloroplast. The enzyme catalyses (2E,6E,10E)-geranylgeranyl diphosphate = ent-copalyl diphosphate. Its pathway is secondary metabolite biosynthesis; terpenoid biosynthesis. Involved in the biosynthesis of ent-kaurene diterpenoids natural products such as oridonin, miltiradiene, eriocalyxin B and nezukol, known to exhibit antitumor, anti-inflammatory and antibacterial activities. Catalyzes the conversion of (2E,6E,10E)-geranylgeranyl diphosphate (GGPP) to ent-copalyl diphosphate (ent-CPP). In Isodon eriocalyx (Plectranthus eriocalyx), this protein is Ent-copalyl diphosphate synthase 2.